A 653-amino-acid chain; its full sequence is Fructose-1,6-bisphosphatase class 3 (653 aa).

The protein belongs to the FBPase class 3 family. Mn(2+) serves as cofactor.

The catalysed reaction is beta-D-fructose 1,6-bisphosphate + H2O = beta-D-fructose 6-phosphate + phosphate. It functions in the pathway carbohydrate biosynthesis; gluconeogenesis. The chain is Fructose-1,6-bisphosphatase class 3 from Listeria innocua serovar 6a (strain ATCC BAA-680 / CLIP 11262).